We begin with the raw amino-acid sequence, 201 residues long: Small ribosomal subunit protein uS4c (201 aa).

The S4 RNA-binding domain maps to 90 to 153 (MRLDNVIFRL…SSQNLVKRYL (64 aa)).

The protein belongs to the universal ribosomal protein uS4 family. Part of the 30S ribosomal subunit. Contacts protein S5. The interaction surface between S4 and S5 is involved in control of translational fidelity.

The protein localises to the plastid. The protein resides in the chloroplast. One of the primary rRNA binding proteins, it binds directly to 16S rRNA where it nucleates assembly of the body of the 30S subunit. Its function is as follows. With S5 and S12 plays an important role in translational accuracy. This is Small ribosomal subunit protein uS4c (rps4) from Gracilaria tenuistipitata var. liui (Red alga).